A 196-amino-acid chain; its full sequence is SAGA-associated factor 11 homolog (196 aa).

Residues 1 to 22 (MSAANMPTTTGAQGSGNQVPTT) are disordered. The SGF11-type zinc-finger motif lies at 106-127 (CTCPNCDRLVAAARFAPHLEKC). Positions 141-196 (RLATKEGATSAHLHSSGNTGGTDDEDDVDWSSDKRRKKSNQNSRNNGSKKNNGKTF) are disordered. Residue serine 172 is modified to Phosphoserine. Residues 180–196 (NQNSRNNGSKKNNGKTF) are compositionally biased toward low complexity.

It belongs to the SGF11 family. Component of some SAGA transcription coactivator-HAT complexes, at least composed of Ada2b, not/nonstop, Pcaf/Gcn5, Sgf11 and Spt3. Within the SAGA complex, Sgf11, e(y)2, and not/nonstop form an additional subcomplex of SAGA called the DUB module (deubiquitination module). Interacts directly with not/nonstop. Interacts with the AMEX complex component xmas-2. Interacts with Cbp80; important for promoter recruitment of Sgf11 that is not associated with the DUB module.

It localises to the nucleus. Its subcellular location is the nucleoplasm. It is found in the cytoplasm. In terms of biological role, component of the transcription regulatory histone acetylation (HAT) complex SAGA, a multiprotein complex that activates transcription by remodeling chromatin and mediating histone acetylation and deubiquitination. Within the SAGA complex, participates in a subcomplex that specifically deubiquitinates histone H2B. The SAGA complex is recruited to specific gene promoters by activators, where it is required for transcription. Required for nuclear receptor-mediated transactivation. Binds independently on SAGA to promoters in an RNA-dependent manner. Binds to mRNA and is essential for total mRNA export from the nucleus. Required to counteract heterochromatin silencing. Controls the development of neuronal connectivity in visual system by being required for accurate axon targeting in the optic lobe. Required for expression of ecdysone-induced genes such as br/broad. This chain is SAGA-associated factor 11 homolog, found in Drosophila simulans (Fruit fly).